The chain runs to 278 residues: Secoisolariciresinol dehydrogenase (278 aa).

Residues 23 to 28, aspartate 47, valine 73, and asparagine 99 contribute to the NAD(+) site; that span reads GGAGGI. Serine 104 and serine 164 together coordinate substrate. Tyrosine 167 (proton donor/acceptor) is an active-site residue. Residues lysine 171 and valine 200 each contribute to the NAD(+) site.

Belongs to the short-chain dehydrogenases/reductases (SDR) family. As to quaternary structure, homotetramer. Mostly expressed in stems and rhizomes, and, to a lower extent, in leaves.

The catalysed reaction is (-)-secoisolariciresinol + 2 NAD(+) = (-)-matairesinol + 2 NADH + 2 H(+). Its pathway is aromatic compound metabolism; phenylpropanoid biosynthesis. Oxidoreductase involved in lignan biosynthesis. Also involved in the biosynthesis of etoposide, a chemotherapeutic compound of the topoisomerase inhibitor family. Catalyzes the stereospecific conversion of (-)-secoisolariciresinol to (-)-matairesinol via a lactol intermediate. The chain is Secoisolariciresinol dehydrogenase from Sinopodophyllum hexandrum (Himalayan may apple).